A 243-amino-acid polypeptide reads, in one-letter code: 1-(5-phosphoribosyl)-5-[(5-phosphoribosylamino)methylideneamino] imidazole-4-carboxamide isomerase (243 aa).

Aspartate 10 functions as the Proton acceptor in the catalytic mechanism. The active-site Proton donor is aspartate 131.

The protein belongs to the HisA/HisF family.

Its subcellular location is the cytoplasm. It carries out the reaction 1-(5-phospho-beta-D-ribosyl)-5-[(5-phospho-beta-D-ribosylamino)methylideneamino]imidazole-4-carboxamide = 5-[(5-phospho-1-deoxy-D-ribulos-1-ylimino)methylamino]-1-(5-phospho-beta-D-ribosyl)imidazole-4-carboxamide. It functions in the pathway amino-acid biosynthesis; L-histidine biosynthesis; L-histidine from 5-phospho-alpha-D-ribose 1-diphosphate: step 4/9. The chain is 1-(5-phosphoribosyl)-5-[(5-phosphoribosylamino)methylideneamino] imidazole-4-carboxamide isomerase from Rhizorhabdus wittichii (strain DSM 6014 / CCUG 31198 / JCM 15750 / NBRC 105917 / EY 4224 / RW1) (Sphingomonas wittichii).